We begin with the raw amino-acid sequence, 72 residues long: ATP synthase subunit c (72 aa).

Transmembrane regions (helical) follow at residues 1-21 (MSLG…GAGI) and 48-68 (MFIG…FSFI).

The protein belongs to the ATPase C chain family. As to quaternary structure, F-type ATPases have 2 components, F(1) - the catalytic core - and F(0) - the membrane proton channel. F(1) has five subunits: alpha(3), beta(3), gamma(1), delta(1), epsilon(1). F(0) has three main subunits: a(1), b(2) and c(10-14). The alpha and beta chains form an alternating ring which encloses part of the gamma chain. F(1) is attached to F(0) by a central stalk formed by the gamma and epsilon chains, while a peripheral stalk is formed by the delta and b chains.

It is found in the cell membrane. Its function is as follows. F(1)F(0) ATP synthase produces ATP from ADP in the presence of a proton or sodium gradient. F-type ATPases consist of two structural domains, F(1) containing the extramembraneous catalytic core and F(0) containing the membrane proton channel, linked together by a central stalk and a peripheral stalk. During catalysis, ATP synthesis in the catalytic domain of F(1) is coupled via a rotary mechanism of the central stalk subunits to proton translocation. Key component of the F(0) channel; it plays a direct role in translocation across the membrane. A homomeric c-ring of between 10-14 subunits forms the central stalk rotor element with the F(1) delta and epsilon subunits. This Bacillus caldotenax protein is ATP synthase subunit c.